A 231-amino-acid polypeptide reads, in one-letter code: Secreted LysM effector LysM13 (231 aa).

The first 19 residues, methionine 1–alanine 19, serve as a signal peptide directing secretion. N-linked (GlcNAc...) asparagine glycosylation is found at asparagine 30, asparagine 34, asparagine 77, asparagine 100, asparagine 130, asparagine 201, and asparagine 226. Positions threonine 38–isoleucine 82 constitute a LysM domain.

This sequence belongs to the secreted LysM effector family.

The protein resides in the secreted. Its function is as follows. Secreted LysM effector that might have a role in sequestration of chitin oligosaccharides (breakdown products of fungal cell walls that are released during invasion and act as triggers of host immunity) to dampen host defense. The protein is Secreted LysM effector LysM13 of Penicillium expansum (Blue mold rot fungus).